We begin with the raw amino-acid sequence, 281 residues long: ATP synthase subunit a (281 aa).

Helical transmembrane passes span 50–70 (FSFTNSSLFMLLTLSLVLLLV), 116–136 (FFPCILVTFTFLLFCNLQGMI), 145–165 (HFLITLGLSFSIFIGITIVGF), 172–192 (FLSFLLPAGVPLPLAPFLVLL), 219–239 (VKILSGFAWTMLCMNDLFYFI), and 246–266 (FIVLALTGLELGVAILQAYVF).

The protein belongs to the ATPase A chain family. F-type ATPases have 2 components, CF(1) - the catalytic core - and CF(0) - the membrane proton channel. CF(1) has five subunits: alpha(3), beta(3), gamma(1), delta(1), epsilon(1). CF(0) has three main subunits: a, b and c.

Its subcellular location is the mitochondrion inner membrane. Its function is as follows. Mitochondrial membrane ATP synthase (F(1)F(0) ATP synthase or Complex V) produces ATP from ADP in the presence of a proton gradient across the membrane which is generated by electron transport complexes of the respiratory chain. F-type ATPases consist of two structural domains, F(1) - containing the extramembraneous catalytic core and F(0) - containing the membrane proton channel, linked together by a central stalk and a peripheral stalk. During catalysis, ATP synthesis in the catalytic domain of F(1) is coupled via a rotary mechanism of the central stalk subunits to proton translocation. Key component of the proton channel; it may play a direct role in the translocation of protons across the membrane. In Oenothera berteroana (Bertero's evening primrose), this protein is ATP synthase subunit a (ATP6).